Here is a 1398-residue protein sequence, read N- to C-terminus: DNA-directed RNA polymerase subunit beta' (1398 aa).

Zn(2+) is bound by residues Cys-73, Cys-75, Cys-88, and Cys-91. Asp-464, Asp-466, and Asp-468 together coordinate Mg(2+). Positions 823, 897, 904, and 907 each coordinate Zn(2+).

This sequence belongs to the RNA polymerase beta' chain family. In terms of assembly, the RNAP catalytic core consists of 2 alpha, 1 beta, 1 beta' and 1 omega subunit. When a sigma factor is associated with the core the holoenzyme is formed, which can initiate transcription. It depends on Mg(2+) as a cofactor. Zn(2+) serves as cofactor.

The catalysed reaction is RNA(n) + a ribonucleoside 5'-triphosphate = RNA(n+1) + diphosphate. DNA-dependent RNA polymerase catalyzes the transcription of DNA into RNA using the four ribonucleoside triphosphates as substrates. This is DNA-directed RNA polymerase subunit beta' from Gluconacetobacter diazotrophicus (strain ATCC 49037 / DSM 5601 / CCUG 37298 / CIP 103539 / LMG 7603 / PAl5).